Here is a 289-residue protein sequence, read N- to C-terminus: tRNA pseudouridine synthase B (289 aa).

The active-site Nucleophile is Asp38.

This sequence belongs to the pseudouridine synthase TruB family. Type 1 subfamily.

The enzyme catalyses uridine(55) in tRNA = pseudouridine(55) in tRNA. Functionally, responsible for synthesis of pseudouridine from uracil-55 in the psi GC loop of transfer RNAs. The protein is tRNA pseudouridine synthase B of Clostridium novyi (strain NT).